The following is a 349-amino-acid chain: GDP-mannose:glycolipid 4-beta-D-mannosyltransferase (349 aa).

The N-terminal stretch at 1-14 (MSASASLPVTRAAA) is a signal peptide.

This sequence belongs to the glycosyltransferase 94 family.

The protein localises to the cell inner membrane. The catalysed reaction is beta-D-GlcA-(1-&gt;2)-alpha-D-Man-(1-&gt;3)-beta-D-Glc-(1-&gt;4)-alpha-D-Glc-di-trans,octa-cis-undecaprenyl diphosphate + GDP-alpha-D-mannose = beta-D-Man-(1-&gt;4)-beta-D-GlcA-(1-&gt;2)-alpha-D-Man-(1-&gt;3)-beta-D-Glc-(1-&gt;4)-alpha-D-Glc-di-trans,octa-cis-undecaprenyl diphosphate + GDP + H(+). It participates in glycan biosynthesis; xanthan biosynthesis. Its function is as follows. Nonprocessive beta-mannosyltransferase that catalyzes the transfer of a mannose residue from GDP-mannose to glucuronic acid-beta-1,2-mannose-alpha-1,3-glucose-beta-1,4-glucose-PP-polyisoprenyl to form the lipid-linked pentasaccharide repeating unit of xanthan, Man-GlcA-Man-Glc(2)-PP-Pol. Is involved in the biosynthesis of the exopolysaccharide xanthan. To a lesser extent, can also use ADP-Man and even GDP-Glc as sugar donor substrates in vitro. Is unable to transfer a Man residue to the free-tetrasaccharide GlcA-Man-Glc(2) used as an acceptor, which indicates that the diphosphate group and the lipid moiety in the acceptor substrate are of major importance for acceptor binding and catalysis. This Xanthomonas campestris pv. campestris protein is GDP-mannose:glycolipid 4-beta-D-mannosyltransferase (gumI).